We begin with the raw amino-acid sequence, 938 residues long: Protein translocase subunit SecA (938 aa).

ATP is bound by residues Q90, 108–112, and D504; that span reads GEGKT.

Belongs to the SecA family. In terms of assembly, monomer and homodimer. Part of the essential Sec protein translocation apparatus which comprises SecA, SecYEG and auxiliary proteins SecDF. Other proteins may also be involved.

It is found in the cell inner membrane. Its subcellular location is the cellular thylakoid membrane. The protein localises to the cytoplasm. It carries out the reaction ATP + H2O + cellular proteinSide 1 = ADP + phosphate + cellular proteinSide 2.. Functionally, part of the Sec protein translocase complex. Interacts with the SecYEG preprotein conducting channel. Has a central role in coupling the hydrolysis of ATP to the transfer of proteins into and across the cell membrane, serving as an ATP-driven molecular motor driving the stepwise translocation of polypeptide chains across the membrane. In terms of biological role, probably participates in protein translocation into and across both the cytoplasmic and thylakoid membranes in cyanobacterial cells. The sequence is that of Protein translocase subunit SecA from Microcystis aeruginosa (strain NIES-843 / IAM M-2473).